Reading from the N-terminus, the 110-residue chain is Large ribosomal subunit protein uL22 (110 aa).

Belongs to the universal ribosomal protein uL22 family. In terms of assembly, part of the 50S ribosomal subunit.

Functionally, this protein binds specifically to 23S rRNA; its binding is stimulated by other ribosomal proteins, e.g. L4, L17, and L20. It is important during the early stages of 50S assembly. It makes multiple contacts with different domains of the 23S rRNA in the assembled 50S subunit and ribosome. In terms of biological role, the globular domain of the protein is located near the polypeptide exit tunnel on the outside of the subunit, while an extended beta-hairpin is found that lines the wall of the exit tunnel in the center of the 70S ribosome. The sequence is that of Large ribosomal subunit protein uL22 from Desulfotalea psychrophila (strain LSv54 / DSM 12343).